The sequence spans 581 residues: Spastin (581 aa).

The segment covering 1-12 (MSSPAGRRKKKG) has biased composition (basic residues). A disordered region spans residues 1–39 (MSSPAGRRKKKGSGGASPAPARPPPPAAVPAPAAGPAPA). The segment at 1-48 (MSSPAGRRKKKGSGGASPAPARPPPPAAVPAPAAGPAPAPGSPHKRNL) is required for nuclear localization. Residues 1-54 (MSSPAGRRKKKGSGGASPAPARPPPPAAVPAPAAGPAPAPGSPHKRNLYYFSYP) are Cytoplasmic-facing. A required for interaction with ATL1 region spans residues 1-78 (MSSPAGRRKK…LGLLFVWLCQ (78 aa)). A required for midbody localization region spans residues 1 to 191 (MSSPAGRRKK…LVMAKDRLQL (191 aa)). Residues 1 to 265 (MSSPAGRRKK…GTSKPNRTNK (265 aa)) form a required for interaction with RTN1 region. A Nuclear localization signal motif is present at residues 4 to 11 (PAGRRKKK). The segment covering 20–39 (PARPPPPAAVPAPAAGPAPA) has biased composition (pro residues). Residues 48–85 (LYYFSYPLVVGFALLRLLACHLGLLFVWLCQRFSRALM) form a required for interaction with SSNA1 and microtubules region. Residues 55 to 75 (LVVGFALLRLLACHLGLLFVW) constitute an intramembrane region (helical). Positions 57 to 65 (VGFALLRLL) match the Nuclear export signal motif. Residues 76–581 (LCQRFSRALM…WNKDFGDTTV (506 aa)) are Cytoplasmic-facing. Residues 90–111 (SSGTAPAPASPSTPAPGPGGEA) form a disordered region. A compositionally biased stretch (pro residues) spans 97–106 (PASPSTPAPG). The MIT domain maps to 118-192 (HKQAFEYISI…VMAKDRLQLL (75 aa)). A sufficient for microtubule severing region spans residues 193–581 (ESGAVPKKKD…WNKDFGDTTV (389 aa)). The disordered stretch occupies residues 195-277 (GAVPKKKDPL…TPTTAVRKKK (83 aa)). Polar residues predominate over residues 206–225 (HASNSLPRSKTVMKSGSTGL). Phosphoserine is present on residues Ser210 and Ser233. The required for interaction with microtubules and microtubule severing stretch occupies residues 235-293 (SGLSMVSGARPGSGPAATTHKGTSKPNRTNKPSTPTTAVRKKKDLKNFRNVDSNLANLI). Residues 254 to 271 (HKGTSKPNRTNKPSTPTT) are compositionally biased toward polar residues. Thr271 carries the post-translational modification Phosphothreonine. The Nuclear localization signal signature appears at 274–277 (RKKK). 347-354 (GPPGNGKT) serves as a coordination point for ATP. Ser562 is subject to Phosphoserine.

Belongs to the AAA ATPase family. Spastin subfamily. As to quaternary structure, homohexamer. Mostly monomeric, but assembles into hexameric structure for short periods of time. Oligomerization seems to be a prerequisite for catalytic activity. Binding to ATP in a cleft between two adjacent subunits stabilizes the homohexameric form. Binds to microtubules at least in part via the alpha-tubulin and beta-tubulin tails. The hexamer adopts a ring conformation through which microtubules pass prior to being severed. Does not interact strongly with tubulin heterodimers. Interacts (via MIT domain) with CHMP1B; the interaction is direct. Interacts with SSNA1. Interacts with ATL1. Interacts with RTN1. Interacts with ZFYVE27. Interacts with REEP1. Interacts (via MIT domain) with IST1.

The protein resides in the membrane. It is found in the endoplasmic reticulum. The protein localises to the midbody. Its subcellular location is the cytoplasm. It localises to the cytoskeleton. The protein resides in the microtubule organizing center. It is found in the centrosome. The protein localises to the perinuclear region. Its subcellular location is the nucleus. It localises to the spindle. The protein resides in the cell projection. It is found in the axon. The catalysed reaction is n ATP + n H2O + a microtubule = n ADP + n phosphate + (n+1) alpha/beta tubulin heterodimers.. With respect to regulation, allosteric enzyme with a cooperative mechanism; at least two neighbor subunits influence each other strongly in spastin hexamers. Microtubule binding promotes cooperative interactions among spastin subunits. Functionally, ATP-dependent microtubule severing protein that specifically recognizes and cuts microtubules that are polyglutamylated. Preferentially recognizes and acts on microtubules decorated with short polyglutamate tails: severing activity increases as the number of glutamates per tubulin rises from one to eight, but decreases beyond this glutamylation threshold. Severing activity is not dependent on tubulin acetylation or detyrosination. Microtubule severing promotes reorganization of cellular microtubule arrays and the release of microtubules from the centrosome following nucleation. It is critical for the biogenesis and maintenance of complex microtubule arrays in axons, spindles and cilia. SPAST is involved in abscission step of cytokinesis and nuclear envelope reassembly during anaphase in cooperation with the ESCRT-III complex. Recruited at the midbody, probably by IST1, and participates in membrane fission during abscission together with the ESCRT-III complex. Recruited to the nuclear membrane by IST1 and mediates microtubule severing, promoting nuclear envelope sealing and mitotic spindle disassembly during late anaphase. Required for membrane traffic from the endoplasmic reticulum (ER) to the Golgi and endosome recycling. Recruited by IST1 to endosomes and regulates early endosomal tubulation and recycling by mediating microtubule severing. Probably plays a role in axon growth and the formation of axonal branches. This is Spastin from Rattus norvegicus (Rat).